The chain runs to 128 residues: Large ribosomal subunit protein bL17 (128 aa).

The protein belongs to the bacterial ribosomal protein bL17 family. Part of the 50S ribosomal subunit. Contacts protein L32.

The sequence is that of Large ribosomal subunit protein bL17 from Streptococcus pyogenes serotype M49 (strain NZ131).